Here is a 318-residue protein sequence, read N- to C-terminus: Probable serine/threonine-protein kinase MRK1 homolog (318 aa).

Residues 40–313 form the Protein kinase domain; the sequence is YRYVEMIGRG…ASELLRKQFF (274 aa). ATP contacts are provided by residues 46–54 and Lys68; that span reads IGRGSFGVV. Catalysis depends on Asp159, which acts as the Proton acceptor.

This sequence belongs to the protein kinase superfamily. CMGC Ser/Thr protein kinase family. GSK-3 subfamily.

It localises to the cytoplasm. It is found in the nucleus. The catalysed reaction is L-seryl-[protein] + ATP = O-phospho-L-seryl-[protein] + ADP + H(+). It catalyses the reaction L-threonyl-[protein] + ATP = O-phospho-L-threonyl-[protein] + ADP + H(+). Functionally, may play a role in the initiation and completion of mitosis. This chain is Probable serine/threonine-protein kinase MRK1 homolog (MRK1), found in Encephalitozoon cuniculi (strain GB-M1) (Microsporidian parasite).